The chain runs to 63 residues: Defensin-like protein 278 (63 aa).

Residues Met1–Ser15 form the signal peptide. 3 disulfides stabilise this stretch: Cys31/Cys48, Cys37/Cys53, and Cys41/Cys55.

This sequence belongs to the DEFL family.

Its subcellular location is the secreted. This chain is Defensin-like protein 278, found in Arabidopsis thaliana (Mouse-ear cress).